A 481-amino-acid chain; its full sequence is ATP synthase subunit beta (481 aa).

160-167 (GGAGVGKT) serves as a coordination point for ATP.

Belongs to the ATPase alpha/beta chains family. As to quaternary structure, F-type ATPases have 2 components, CF(1) - the catalytic core - and CF(0) - the membrane proton channel. CF(1) has five subunits: alpha(3), beta(3), gamma(1), delta(1), epsilon(1). CF(0) has three main subunits: a(1), b(2) and c(9-12). The alpha and beta chains form an alternating ring which encloses part of the gamma chain. CF(1) is attached to CF(0) by a central stalk formed by the gamma and epsilon chains, while a peripheral stalk is formed by the delta and b chains.

It localises to the cell inner membrane. It carries out the reaction ATP + H2O + 4 H(+)(in) = ADP + phosphate + 5 H(+)(out). Functionally, produces ATP from ADP in the presence of a proton gradient across the membrane. The catalytic sites are hosted primarily by the beta subunits. The chain is ATP synthase subunit beta from Anaeromyxobacter sp. (strain Fw109-5).